The following is a 627-amino-acid chain: Chaperone protein DnaK (627 aa).

Thr197 is modified (phosphothreonine; by autocatalysis). The segment covering 602 to 611 (ENQHSEANTV) has biased composition (polar residues). The disordered stretch occupies residues 602 to 627 (ENQHSEANTVNDEKVVDADFQDVDKK). Over residues 612–627 (NDEKVVDADFQDVDKK) the composition is skewed to basic and acidic residues.

This sequence belongs to the heat shock protein 70 family.

Acts as a chaperone. This Rickettsia felis (strain ATCC VR-1525 / URRWXCal2) (Rickettsia azadi) protein is Chaperone protein DnaK.